Here is a 256-residue protein sequence, read N- to C-terminus: Histone H1 (256 aa).

2 stretches are compositionally biased toward low complexity: residues 1-19 (MSDS…PPAT) and 27-43 (KKAS…ASAT). 2 disordered regions span residues 1-53 (MSDS…QQMV) and 108-256 (GKGA…AAKK). Serine 11 carries the post-translational modification Phosphoserine. Residues 45 to 119 (SHPPTQQMVD…GASGSFKLSA (75 aa)) enclose the H15 domain. Composition is skewed to basic and acidic residues over residues 121–140 (AKKE…EKKV) and 176–193 (KTAE…DAKK). The span at 194-229 (TGIIKSKPAATKAKVTAAKPKAVVAKASKAKPAVSA) shows a compositional bias: low complexity. Positions 245-256 (KKPKAKTTAAKK) are enriched in basic residues.

This sequence belongs to the histone H1/H5 family. Post-translationally, phosphorylated in oocytes during prophase I of meiosis.

The protein localises to the nucleus. It localises to the chromosome. Histones H1 are necessary for the condensation of nucleosome chains into higher-order structures. The protein is Histone H1 (His1) of Drosophila melanogaster (Fruit fly).